Consider the following 641-residue polypeptide: DNA mismatch repair protein MutL (641 aa).

The segment at 345–445 is disordered; the sequence is PAAVAPPAPA…GDTSLGDTSP (101 aa). Positions 419-429 are enriched in basic and acidic residues; that stretch reads PRTEPATRTGE. Positions 432-442 are enriched in polar residues; sequence GISSGDTSLGD.

The protein belongs to the DNA mismatch repair MutL/HexB family.

In terms of biological role, this protein is involved in the repair of mismatches in DNA. It is required for dam-dependent methyl-directed DNA mismatch repair. May act as a 'molecular matchmaker', a protein that promotes the formation of a stable complex between two or more DNA-binding proteins in an ATP-dependent manner without itself being part of a final effector complex. The sequence is that of DNA mismatch repair protein MutL from Azotobacter vinelandii (strain DJ / ATCC BAA-1303).